The primary structure comprises 506 residues: ATP synthase subunit alpha (506 aa).

Residue 171-178 (GDRKTGKT) participates in ATP binding.

The protein belongs to the ATPase alpha/beta chains family. F-type ATPases have 2 components, CF(1) - the catalytic core - and CF(0) - the membrane proton channel. CF(1) has five subunits: alpha(3), beta(3), gamma(1), delta(1), epsilon(1). CF(0) has three main subunits: a(1), b(2) and c(9-12). The alpha and beta chains form an alternating ring which encloses part of the gamma chain. CF(1) is attached to CF(0) by a central stalk formed by the gamma and epsilon chains, while a peripheral stalk is formed by the delta and b chains.

The protein localises to the cell inner membrane. It catalyses the reaction ATP + H2O + 4 H(+)(in) = ADP + phosphate + 5 H(+)(out). In terms of biological role, produces ATP from ADP in the presence of a proton gradient across the membrane. The alpha chain is a regulatory subunit. The polypeptide is ATP synthase subunit alpha (Anaplasma phagocytophilum (strain HZ)).